We begin with the raw amino-acid sequence, 463 residues long: 3-isopropylmalate dehydratase large subunit (463 aa).

Positions 347, 407, and 410 each coordinate [4Fe-4S] cluster.

This sequence belongs to the aconitase/IPM isomerase family. LeuC type 1 subfamily. Heterodimer of LeuC and LeuD. The cofactor is [4Fe-4S] cluster.

It catalyses the reaction (2R,3S)-3-isopropylmalate = (2S)-2-isopropylmalate. It participates in amino-acid biosynthesis; L-leucine biosynthesis; L-leucine from 3-methyl-2-oxobutanoate: step 2/4. Functionally, catalyzes the isomerization between 2-isopropylmalate and 3-isopropylmalate, via the formation of 2-isopropylmaleate. The chain is 3-isopropylmalate dehydratase large subunit from Buchnera aphidicola subsp. Cinara cedri (strain Cc).